The primary structure comprises 306 residues: Ribonuclease Z (306 aa).

Zn(2+)-binding residues include H63, H65, D67, H68, H140, D211, and H269. Residue D67 is the Proton acceptor of the active site.

The protein belongs to the RNase Z family. As to quaternary structure, homodimer. Zn(2+) serves as cofactor.

The enzyme catalyses Endonucleolytic cleavage of RNA, removing extra 3' nucleotides from tRNA precursor, generating 3' termini of tRNAs. A 3'-hydroxy group is left at the tRNA terminus and a 5'-phosphoryl group is left at the trailer molecule.. Zinc phosphodiesterase, which displays some tRNA 3'-processing endonuclease activity. Probably involved in tRNA maturation, by removing a 3'-trailer from precursor tRNA. In Listeria innocua serovar 6a (strain ATCC BAA-680 / CLIP 11262), this protein is Ribonuclease Z.